Consider the following 220-residue polypeptide: Peptidyl-tRNA hydrolase (220 aa).

Residue Y14 participates in tRNA binding. The active-site Proton acceptor is the H19. 3 residues coordinate tRNA: F66, N68, and N114. A disordered region spans residues 184–220 (QAFNSTDLRPRPEPVPAPQPADVSGPQETGPAERPEV).

Belongs to the PTH family. In terms of assembly, monomer.

The protein localises to the cytoplasm. It catalyses the reaction an N-acyl-L-alpha-aminoacyl-tRNA + H2O = an N-acyl-L-amino acid + a tRNA + H(+). Hydrolyzes ribosome-free peptidyl-tRNAs (with 1 or more amino acids incorporated), which drop off the ribosome during protein synthesis, or as a result of ribosome stalling. Functionally, catalyzes the release of premature peptidyl moieties from peptidyl-tRNA molecules trapped in stalled 50S ribosomal subunits, and thus maintains levels of free tRNAs and 50S ribosomes. The polypeptide is Peptidyl-tRNA hydrolase (Deinococcus deserti (strain DSM 17065 / CIP 109153 / LMG 22923 / VCD115)).